The primary structure comprises 430 residues: Serine carboxypeptidase-like 13 (430 aa).

Residues methionine 1–serine 22 form the signal peptide. 3 cysteine pairs are disulfide-bonded: cysteine 81–cysteine 319, cysteine 240–cysteine 254, and cysteine 278–cysteine 285. Asparagine 102 carries an N-linked (GlcNAc...) asparagine glycan. The active site involves serine 177. Residues asparagine 299 and asparagine 323 are each glycosylated (N-linked (GlcNAc...) asparagine). The active site involves aspartate 355. N-linked (GlcNAc...) asparagine glycosylation is present at asparagine 371. Histidine 408 is a catalytic residue.

Belongs to the peptidase S10 family. Expression not detected.

The protein localises to the secreted. The enzyme catalyses 2 1-O-(trans-sinapoyl)-beta-D-glucose = 1,2-di-O-sinapoyl beta-D-glucose + D-glucose. In terms of biological role, catalyzes the formation of 1,2-bis-O-sinapoyl beta-D-glucoside. This Arabidopsis thaliana (Mouse-ear cress) protein is Serine carboxypeptidase-like 13 (SCPL13).